Here is a 213-residue protein sequence, read N- to C-terminus: Orotate phosphoribosyltransferase (213 aa).

Residue K26 participates in 5-phospho-alpha-D-ribose 1-diphosphate binding. Position 34–35 (F34–F35) interacts with orotate. 5-phospho-alpha-D-ribose 1-diphosphate contacts are provided by residues Y72–K73, R99, K100, K103, H105, and D124–A132. Orotate contacts are provided by T128 and R156.

Belongs to the purine/pyrimidine phosphoribosyltransferase family. PyrE subfamily. In terms of assembly, homodimer. Mg(2+) is required as a cofactor.

The catalysed reaction is orotidine 5'-phosphate + diphosphate = orotate + 5-phospho-alpha-D-ribose 1-diphosphate. The protein operates within pyrimidine metabolism; UMP biosynthesis via de novo pathway; UMP from orotate: step 1/2. Catalyzes the transfer of a ribosyl phosphate group from 5-phosphoribose 1-diphosphate to orotate, leading to the formation of orotidine monophosphate (OMP). This chain is Orotate phosphoribosyltransferase, found in Alteromonas mediterranea (strain DSM 17117 / CIP 110805 / LMG 28347 / Deep ecotype).